We begin with the raw amino-acid sequence, 266 residues long: Luciferase (266 aa).

Residues 22-41 (GLAVTCCAVAVASIIAFPYI) form a helical membrane-spanning segment.

The protein belongs to the fungal luciferase family.

It localises to the membrane. The enzyme catalyses 3-hydroxyhispidin + O2 = (E)-caffeoylpyruvate + hnu + CO2. The catalysed reaction is 3-hydroxyhispidin + O2 = 4-[(E)-2-(3,4-dihydroxyphenyl)ethenyl]-1,7-dihydroxy-2,3,5-trioxabicyclo[2.2.2]oct-7-en-6-one. Luciferase; part of the gene cluster that mediates the fungal bioluminescence cycle. Uses the fungal luciferin 3-hydroxyhispidin as a substrate to produce an endoperoxide as a high-energy intermediate with decomposition that yields oxyluciferin (also known as caffeoylpyruvate) and light emission. The fungal bioluminescence cycle begins with the hispidin synthetase that catalyzes the formation of hispidin which is further hydroxylated by the hispidin-3-hydroxylase, yielding the fungal luciferin 3-hydroxyhispidin. The luciferase then produces an endoperoxide as a high-energy intermediate with decomposition that yields oxyluciferin and light emission. Oxyluciferin can be recycled to caffeic acid by caffeoylpyruvate hydrolase. The protein is Luciferase of Armillaria mellea (Honey mushroom).